We begin with the raw amino-acid sequence, 370 residues long: Serine/threonine-protein kinase SAPK5 (370 aa).

In terms of domain architecture, Protein kinase spans 4–260 (YEPVREIGAG…MGEIKSHPWF (257 aa)). ATP is bound by residues 10–18 (IGAGNFGVA) and lysine 33. Aspartate 123 (proton acceptor) is an active-site residue. Residues 312-370 (EAQTVPKPDKPVSGYGWGTDDDDDDQQPAEEEDEEDDYDRTVREVHASVDLDMSNLQIS) are disordered. A compositionally biased stretch (acidic residues) spans 330-349 (TDDDDDDQQPAEEEDEEDDY). The segment covering 350–360 (DRTVREVHASV) has biased composition (basic and acidic residues).

Belongs to the protein kinase superfamily. Ser/Thr protein kinase family. May be phosphorylated. In terms of tissue distribution, expressed in leaf blades, leaf sheaths and roots. Expressed in shoots and roots of young seedlings.

The protein resides in the cytoplasm. It is found in the nucleus. It carries out the reaction L-seryl-[protein] + ATP = O-phospho-L-seryl-[protein] + ADP + H(+). It catalyses the reaction L-threonyl-[protein] + ATP = O-phospho-L-threonyl-[protein] + ADP + H(+). With respect to regulation, activated by hyperosmotic stress. Its function is as follows. May play a role in signal transduction of hyperosmotic response. The polypeptide is Serine/threonine-protein kinase SAPK5 (SAPK5) (Oryza sativa subsp. japonica (Rice)).